The chain runs to 460 residues: Muscarinic acetylcholine receptor M1 (460 aa).

Residues 1 to 22 (MNTSVPPAVSPNITVLAPGKGP) lie on the Extracellular side of the membrane. 2 N-linked (GlcNAc...) asparagine glycosylation sites follow: N2 and N12. The chain crosses the membrane as a helical span at residues 23 to 48 (WQVAFIGITTGLLSLATVTGNLLVLI). Over 49–62 (SFKVNTELKTVNNY) the chain is Cytoplasmic. A helical transmembrane segment spans residues 63–84 (FLLSLACADLIIGTFSMNLYTT). The Extracellular portion of the chain corresponds to 85–95 (YLLMGHWALGT). The chain crosses the membrane as a helical span at residues 96–121 (LACDLWLALDYVASNASVMNLLLISF). C98 and C178 are joined by a disulfide. Topologically, residues 122–142 (DRYFSVTRPLSYRAKRTPRRA) are cytoplasmic. Residues 143–164 (ALMIGLAWLVSFVLWAPAILFW) form a helical membrane-spanning segment. Topologically, residues 165–185 (QYLVGERTVLAGQCYIQFLSQ) are extracellular. The helical transmembrane segment at 186-209 (PIITFGTAMAAFYLPVTVMCTLYW) threads the bilayer. Over 210-366 (RIYRETENRA…LVKEKKAART (157 aa)) the chain is Cytoplasmic. 3 disordered regions span residues 225 to 257 (LQGS…SPPG), 274 to 297 (WKEE…EEPG), and 310 to 351 (EAQA…QLAK). Phosphothreonine is present on T230. The segment covering 238–257 (SSSSERSQPGAEGSPESPPG) has biased composition (low complexity). Residue S254 is modified to Phosphoserine. Residues 328–343 (RPTKKGRDRGGKGQKP) are compositionally biased toward basic residues. The chain crosses the membrane as a helical span at residues 367–390 (LSAILLAFILTWTPYNIMVLVSTF). The Extracellular portion of the chain corresponds to 391-397 (CKDCVPE). A helical transmembrane segment spans residues 398–420 (TLWELGYWLCYVNSTVNPMCYAL). Over 421 to 460 (CNKAFRDTFRLLLLCRWDKRRWRKIPKRPGSVHRTPSRQC) the chain is Cytoplasmic. S451 is modified (phosphoserine). T455 carries the phosphothreonine modification. Phosphoserine is present on S457.

The protein belongs to the G-protein coupled receptor 1 family. Muscarinic acetylcholine receptor subfamily. CHRM1 sub-subfamily. In terms of assembly, interacts with GPRASP2. Interacts with TMEM147.

The protein resides in the cell membrane. It localises to the postsynaptic cell membrane. Its function is as follows. The muscarinic acetylcholine receptor mediates various cellular responses, including inhibition of adenylate cyclase, breakdown of phosphoinositides and modulation of potassium channels through the action of G proteins. Primary transducing effect is Pi turnover. This chain is Muscarinic acetylcholine receptor M1 (Chrm1), found in Mus musculus (Mouse).